Here is a 192-residue protein sequence, read N- to C-terminus: Erythropoietin (192 aa).

The signal sequence occupies residues Met1 to Cys26. Cys33 and Cys187 are disulfide-bonded. 3 N-linked (GlcNAc...) asparagine glycosylation sites follow: Asn50, Asn64, and Asn109.

This sequence belongs to the EPO/TPO family. As to expression, produced by kidney or liver of adult mammals and by liver of fetal or neonatal mammals.

It localises to the secreted. In terms of biological role, hormone involved in the regulation of erythrocyte proliferation and differentiation and the maintenance of a physiological level of circulating erythrocyte mass. Binds to EPOR leading to EPOR dimerization and JAK2 activation thereby activating specific downstream effectors, including STAT1 and STAT3. The sequence is that of Erythropoietin (Epo) from Mus musculus (Mouse).